We begin with the raw amino-acid sequence, 192 residues long: Pyridoxal 5'-phosphate synthase subunit PdxT (192 aa).

53-55 (GES) serves as a coordination point for L-glutamine. Cys-82 serves as the catalytic Nucleophile. L-glutamine-binding positions include Arg-108 and 134-135 (IR). Active-site charge relay system residues include His-170 and Glu-172.

The protein belongs to the glutaminase PdxT/SNO family. In terms of assembly, in the presence of PdxS, forms a dodecamer of heterodimers. Only shows activity in the heterodimer.

It catalyses the reaction aldehydo-D-ribose 5-phosphate + D-glyceraldehyde 3-phosphate + L-glutamine = pyridoxal 5'-phosphate + L-glutamate + phosphate + 3 H2O + H(+). The enzyme catalyses L-glutamine + H2O = L-glutamate + NH4(+). The protein operates within cofactor biosynthesis; pyridoxal 5'-phosphate biosynthesis. Functionally, catalyzes the hydrolysis of glutamine to glutamate and ammonia as part of the biosynthesis of pyridoxal 5'-phosphate. The resulting ammonia molecule is channeled to the active site of PdxS. The sequence is that of Pyridoxal 5'-phosphate synthase subunit PdxT from Methanosphaera stadtmanae (strain ATCC 43021 / DSM 3091 / JCM 11832 / MCB-3).